The sequence spans 750 residues: Photosystem I P700 chlorophyll a apoprotein A1 (750 aa).

A run of 8 helical transmembrane segments spans residues 70 to 93 (VFSAHFGQLSIIFLWLSGMYFHGA), 156 to 179 (LYCTAIGALIFAALMLFAGWFHYH), 195 to 219 (LNHHLAGLLGLGSLSWAGHQVHVSL), 291 to 309 (TAHHHLAIAILFLIAGHMY), 346 to 369 (WHAQLSLNLAMLGSLTIVVAHHMY), 385 to 411 (LSLFTHHMWIGGFLIVGAAAHAAIFMV), 433 to 455 (AIISHLNWACIFLGFHSFGLYIH), and 531 to 549 (FLVHHIHAFTIHVTVLILL). Residues cysteine 573 and cysteine 582 each contribute to the [4Fe-4S] cluster site. A run of 2 helical transmembrane segments spans residues 589 to 610 (HVFLGLFWMYNSISVVIFHFSW) and 664 to 686 (LSAYGLFFLGAHFVWAFSLMFLF). Histidine 675 serves as a coordination point for chlorophyll a'. Chlorophyll a-binding residues include methionine 683 and tyrosine 691. A phylloquinone-binding site is contributed by tryptophan 692. The helical transmembrane segment at 724–744 (AVGVTHYLLGGIATTWAFFLA) threads the bilayer.

This sequence belongs to the PsaA/PsaB family. As to quaternary structure, the PsaA/B heterodimer binds the P700 chlorophyll special pair and subsequent electron acceptors. PSI consists of a core antenna complex that captures photons, and an electron transfer chain that converts photonic excitation into a charge separation. The eukaryotic PSI reaction center is composed of at least 11 subunits. P700 is a chlorophyll a/chlorophyll a' dimer, A0 is one or more chlorophyll a, A1 is one or both phylloquinones and FX is a shared 4Fe-4S iron-sulfur center. is required as a cofactor.

Its subcellular location is the plastid. The protein localises to the chloroplast thylakoid membrane. The catalysed reaction is reduced [plastocyanin] + hnu + oxidized [2Fe-2S]-[ferredoxin] = oxidized [plastocyanin] + reduced [2Fe-2S]-[ferredoxin]. In terms of biological role, psaA and PsaB bind P700, the primary electron donor of photosystem I (PSI), as well as the electron acceptors A0, A1 and FX. PSI is a plastocyanin-ferredoxin oxidoreductase, converting photonic excitation into a charge separation, which transfers an electron from the donor P700 chlorophyll pair to the spectroscopically characterized acceptors A0, A1, FX, FA and FB in turn. Oxidized P700 is reduced on the lumenal side of the thylakoid membrane by plastocyanin. This Helianthus annuus (Common sunflower) protein is Photosystem I P700 chlorophyll a apoprotein A1.